Reading from the N-terminus, the 392-residue chain is Lipase (392 aa).

Positions 1-26 (MVSFISISQGVSLCLLVSSMMLGSSA) are cleaved as a signal peptide. Positions 27–95 (VPVSGKSGSS…GGNLTSIGKR (69 aa)) are excised as a propeptide. The disordered stretch occupies residues 50-69 (PLISSRCAPPSNKGSKSDLQ). 3 cysteine pairs are disulfide-bonded: Cys152-Cys391, Cys163-Cys166, and Cys358-Cys367. Catalysis depends on Ser268, which acts as the Nucleophile. Asp327 serves as the catalytic Charge relay system. Asp379 provides a ligand contact to Ca(2+). His380 (charge relay system) is an active-site residue.

Belongs to the AB hydrolase superfamily. Lipase family.

It localises to the secreted. The protein localises to the extracellular space. It carries out the reaction a triacylglycerol + H2O = a diacylglycerol + a fatty acid + H(+). Lipase activity is maximal at a lipid-water interface (interfacial activation), probably by an induced conformational change that results in an increased accessibility of the active site to the substrate. Functionally, hydrolyzes ester bonds of triglycerides as well as of their derived partial glycerides with a strong 1,3-positional specificity. The polypeptide is Lipase (Rhizopus niveus).